The following is a 250-amino-acid chain: Malonyl-[acyl-carrier protein] O-methyltransferase (250 aa).

This sequence belongs to the methyltransferase superfamily.

It carries out the reaction malonyl-[ACP] + S-adenosyl-L-methionine = malonyl-[ACP] methyl ester + S-adenosyl-L-homocysteine. It functions in the pathway cofactor biosynthesis; biotin biosynthesis. Its function is as follows. Converts the free carboxyl group of a malonyl-thioester to its methyl ester by transfer of a methyl group from S-adenosyl-L-methionine (SAM). It allows to synthesize pimeloyl-ACP via the fatty acid synthetic pathway. The sequence is that of Malonyl-[acyl-carrier protein] O-methyltransferase from Neorickettsia risticii (strain Illinois).